A 291-amino-acid polypeptide reads, in one-letter code: ATP synthase gamma chain (291 aa).

This sequence belongs to the ATPase gamma chain family. As to quaternary structure, F-type ATPases have 2 components, CF(1) - the catalytic core - and CF(0) - the membrane proton channel. CF(1) has five subunits: alpha(3), beta(3), gamma(1), delta(1), epsilon(1). CF(0) has three main subunits: a, b and c.

The protein resides in the cell inner membrane. Functionally, produces ATP from ADP in the presence of a proton gradient across the membrane. The gamma chain is believed to be important in regulating ATPase activity and the flow of protons through the CF(0) complex. The polypeptide is ATP synthase gamma chain (Caulobacter vibrioides (strain NA1000 / CB15N) (Caulobacter crescentus)).